The chain runs to 36 residues: Defensin-like turtle egg white protein TEWP (36 aa).

Glutamine 1 carries the post-translational modification Pyrrolidone carboxylic acid. Cystine bridges form between cysteine 4–cysteine 30, cysteine 8–cysteine 29, and cysteine 12–cysteine 24.

This sequence belongs to the beta-defensin family. Monomer. Detected in egg white (at protein level).

The protein localises to the secreted. Antibacterial and antiviral peptide. Has strong inhibitory activity towards E.coli and S.typhimurium. Has significant antiviral activity against Chandipura virus. This chain is Defensin-like turtle egg white protein TEWP, found in Caretta caretta (Loggerhead sea turtle).